A 278-amino-acid chain; its full sequence is MSLLLQQHLSQPWRFLDHTSFGPTFQALQSFAYDDTLCTSIGKSQSPPTLRAWVHHNTVVLGIQDSRLPQIKAGIEALKGFQHDVIVRNSGGLAVVLDSGILNLSLVLKEEKGFSIDDGYELMYELICSMFQDHREQIEAREIVGSYCPGSYDLSIDGKKFAGISQRRIRGGVAVQIYLCVSGSGAERAKMIRTFYDKAVAGQPTKFVYPRIKPETMASLSELLGQPHNVSDVLLKALMTLQQHGASLLTESLSADEWLLYEQHFARISERNEKLLAE.

One can recognise a BPL/LPL catalytic domain in the interval S44 to L249. C148 (acyl-thioester intermediate) is an active-site residue.

Belongs to the octanoyltransferase LipL family.

The enzyme catalyses N(6)-octanoyl-L-lysyl-[glycine-cleavage complex H protein] + L-lysyl-[lipoyl-carrier protein] = N(6)-octanoyl-L-lysyl-[lipoyl-carrier protein] + L-lysyl-[glycine-cleavage complex H protein]. It functions in the pathway protein modification; protein lipoylation via endogenous pathway; protein N(6)-(lipoyl)lysine from octanoyl-[acyl-carrier-protein]. In terms of biological role, catalyzes the amidotransfer (transamidation) of the octanoyl moiety from octanoyl-GcvH to the lipoyl domain of the E2 subunit of lipoate-dependent enzymes. The sequence is that of Octanoyl-[GcvH]:protein N-octanoyltransferase from Halalkalibacterium halodurans (strain ATCC BAA-125 / DSM 18197 / FERM 7344 / JCM 9153 / C-125) (Bacillus halodurans).